Consider the following 377-residue polypeptide: Lipoyl synthase, mitochondrial (377 aa).

Positions 103, 108, 114, 134, 138, 141, and 349 each coordinate [4Fe-4S] cluster. The Radical SAM core domain occupies 119-338; sequence EHGTQTATIM…EERGNELGFL (220 aa).

The protein belongs to the radical SAM superfamily. Lipoyl synthase family. It depends on [4Fe-4S] cluster as a cofactor.

It localises to the mitochondrion. It catalyses the reaction [[Fe-S] cluster scaffold protein carrying a second [4Fe-4S](2+) cluster] + N(6)-octanoyl-L-lysyl-[protein] + 2 oxidized [2Fe-2S]-[ferredoxin] + 2 S-adenosyl-L-methionine + 4 H(+) = [[Fe-S] cluster scaffold protein] + N(6)-[(R)-dihydrolipoyl]-L-lysyl-[protein] + 4 Fe(3+) + 2 hydrogen sulfide + 2 5'-deoxyadenosine + 2 L-methionine + 2 reduced [2Fe-2S]-[ferredoxin]. The protein operates within protein modification; protein lipoylation via endogenous pathway; protein N(6)-(lipoyl)lysine from octanoyl-[acyl-carrier-protein]: step 2/2. In terms of biological role, catalyzes the radical-mediated insertion of two sulfur atoms into the C-6 and C-8 positions of the octanoyl moiety bound to the lipoyl domains of lipoate-dependent enzymes, thereby converting the octanoylated domains into lipoylated derivatives. In Drosophila sechellia (Fruit fly), this protein is Lipoyl synthase, mitochondrial.